Here is a 339-residue protein sequence, read N- to C-terminus: Serine/threonine-protein kinase SAPK2 (339 aa).

Residues 4 to 260 (YEVIKDIGSG…IPEIKNHPWF (257 aa)) enclose the Protein kinase domain. Residues 10-18 (IGSGNFGVA) and Lys-33 contribute to the ATP site. Catalysis depends on Asp-123, which acts as the Proton acceptor. Residues 253-339 (EIKNHPWFLK…EDSGDFVCAL (87 aa)) form a C-terminal region.

This sequence belongs to the protein kinase superfamily. Ser/Thr protein kinase family. In terms of assembly, interacts with BZIP46. Interacts with ABI5 and PP2C30. Interacts with PP2C51. Post-translationally, phosphorylated. Expressed in leaf blades, leaf sheaths and roots. Expressed in shoots and roots of young seedlings.

It localises to the cytoplasm. Its subcellular location is the nucleus. It catalyses the reaction L-seryl-[protein] + ATP = O-phospho-L-seryl-[protein] + ADP + H(+). The enzyme catalyses L-threonyl-[protein] + ATP = O-phospho-L-threonyl-[protein] + ADP + H(+). Its activity is regulated as follows. Activated by phosphorylation in response to hyperosmotic stress within 5 minutes. Functionally, may play a role in signal transduction of hyperosmotic response. Can phosphorylate BZIP46 in vitro. Together with ABI5, PP2C30 and PYL5, is part of an abscisic acid (ABA) signaling unit that modulates seed germination and early seedling growth. In Oryza sativa subsp. japonica (Rice), this protein is Serine/threonine-protein kinase SAPK2 (SAPK2).